The following is a 496-amino-acid chain: Glutamate--cysteine ligase B, chloroplastic (496 aa).

The transit peptide at Met-1–Pro-34 directs the protein to the chloroplast. The disordered stretch occupies residues Pro-14 to Thr-53. Residues Pro-29–Gly-38 are compositionally biased toward low complexity. Cys-160 and Cys-380 form a disulfide bridge.

This sequence belongs to the carboxylate-amine ligase family. Glutamate--cysteine ligase type 2 subfamily. As to quaternary structure, homodimer or monomer when oxidized or reduced, respectively. The Cys-160-Cys-380 disulfide bridge is known to modulate the enzyme activity according to the redox status. The oxidized form constitutes the active enzyme.

It localises to the plastid. The protein resides in the chloroplast. It carries out the reaction L-cysteine + L-glutamate + ATP = gamma-L-glutamyl-L-cysteine + ADP + phosphate + H(+). It participates in sulfur metabolism; glutathione biosynthesis; glutathione from L-cysteine and L-glutamate: step 1/2. The polypeptide is Glutamate--cysteine ligase B, chloroplastic (GSH1-2) (Oryza sativa subsp. japonica (Rice)).